Consider the following 321-residue polypeptide: Torsin-2A (321 aa).

An N-terminal signal peptide occupies residues 1-26 (MAAATRSCRPWGSLLGLIWLVSAAAA). Residue 93 to 100 (GWTGTGKS) participates in ATP binding. Asn-149 carries N-linked (GlcNAc...) asparagine glycosylation.

It belongs to the ClpA/ClpB family. Torsin subfamily. As to quaternary structure, homohexamer. Interacts with TOR1AIP1.

Its subcellular location is the endoplasmic reticulum lumen. This is Torsin-2A (TOR2A) from Bos taurus (Bovine).